Here is a 312-residue protein sequence, read N- to C-terminus: Zinc transporter ZitB (312 aa).

6 consecutive transmembrane segments (helical) span residues 16–36, 40–60, 81–101, 117–137, 153–173, and 177–197; these read LLIA…GGWL, LALL…FIAL, LTTL…ILIV, TPML…FWIL, LHVL…IVIL, and WTPI…RNAW.

It belongs to the cation diffusion facilitator (CDF) transporter (TC 2.A.4) family. SLC30A subfamily.

The protein resides in the cell inner membrane. Functionally, involved in zinc efflux across the cytoplasmic membrane, thus reducing zinc accumulation in the cytoplasm and rendering bacteria more resistant to zinc. It may contribute to zinc homeostasis at low concentrations of zinc. This Yersinia pseudotuberculosis serotype I (strain IP32953) protein is Zinc transporter ZitB.